A 333-amino-acid polypeptide reads, in one-letter code: Uroporphyrinogen decarboxylase (333 aa).

Substrate is bound by residues Arg-22–Arg-26, Asp-71, Tyr-145, Ser-200, and His-310.

This sequence belongs to the uroporphyrinogen decarboxylase family. As to quaternary structure, homodimer.

It localises to the cytoplasm. The catalysed reaction is uroporphyrinogen III + 4 H(+) = coproporphyrinogen III + 4 CO2. It functions in the pathway porphyrin-containing compound metabolism; protoporphyrin-IX biosynthesis; coproporphyrinogen-III from 5-aminolevulinate: step 4/4. In terms of biological role, catalyzes the decarboxylation of four acetate groups of uroporphyrinogen-III to yield coproporphyrinogen-III. This chain is Uroporphyrinogen decarboxylase, found in Thermoplasma acidophilum (strain ATCC 25905 / DSM 1728 / JCM 9062 / NBRC 15155 / AMRC-C165).